The sequence spans 101 residues: MKHKLSAILMAFMLTTPAAFAAPEATNGTEATTGTTGTTTTTTGATTTATTTGGVAAGAVGTATVVGVATAVGVATLAVVAANDSGDGGSHNTSTTTSTTR.

The signal sequence occupies residues 1–21; sequence MKHKLSAILMAFMLTTPAAFA. The Cytoplasmic portion of the chain corresponds to 22–59; sequence APEATNGTEATTGTTGTTTTTTGATTTATTTGGVAAGA. The interval 24 to 45 is disordered; the sequence is EATNGTEATTGTTGTTTTTTGA. The helical transmembrane segment at 60–80 threads the bilayer; it reads VGTATVVGVATAVGVATLAVV. Over 81–101 the chain is Periplasmic; the sequence is AANDSGDGGSHNTSTTTSTTR. Positions 82 to 101 are disordered; it reads ANDSGDGGSHNTSTTTSTTR.

The protein resides in the cell inner membrane. The polypeptide is Threonine-rich inner membrane protein GfcA (gfcA) (Escherichia coli (strain K12)).